Consider the following 76-residue polypeptide: Esculentin-2CG1 (76 aa).

The signal sequence occupies residues 1–22 (MFTMKKSMLLLFFLGTISLSLC). Residues 23–37 (EEERSADEDDGEEEV) constitute a propeptide, removed in mature form. A disulfide bond links C70 and C76.

As to expression, expressed by the skin glands.

It is found in the secreted. Antimicrobial peptide active against a variety of Gram-positive and some Gram-negative bacterial strains. Has antifungal activity against a slime mold isolate. Has hemolytic activity against human erythrocytes. This chain is Esculentin-2CG1, found in Amolops chunganensis (Chungan torrent frog).